The chain runs to 288 residues: S-methyl-5'-thioadenosine phosphorylase (288 aa).

Residues serine 12, 54–55, and 87–88 contribute to the phosphate site; these read RH and SA. Methionine 186 lines the substrate pocket. Threonine 187 provides a ligand contact to phosphate. A substrate-binding site is contributed by 210-212; sequence DYD.

This sequence belongs to the PNP/MTAP phosphorylase family. MTAP subfamily. Homohexamer. Dimer of a homotrimer.

It catalyses the reaction S-methyl-5'-thioadenosine + phosphate = 5-(methylsulfanyl)-alpha-D-ribose 1-phosphate + adenine. Its pathway is amino-acid biosynthesis; L-methionine biosynthesis via salvage pathway; S-methyl-5-thio-alpha-D-ribose 1-phosphate from S-methyl-5'-thioadenosine (phosphorylase route): step 1/1. Catalyzes the reversible phosphorylation of S-methyl-5'-thioadenosine (MTA) to adenine and 5-methylthioribose-1-phosphate. Involved in the breakdown of MTA, a major by-product of polyamine biosynthesis. Responsible for the first step in the methionine salvage pathway after MTA has been generated from S-adenosylmethionine. Has broad substrate specificity with 6-aminopurine nucleosides as preferred substrates. This is S-methyl-5'-thioadenosine phosphorylase from Chloroflexus aurantiacus (strain ATCC 29366 / DSM 635 / J-10-fl).